Here is a 563-residue protein sequence, read N- to C-terminus: Cystathionine gamma-synthase-like protein ankD (563 aa).

Residues 1–37 form a disordered region; that stretch reads MGELGPASAQHGSDSISFSGSYTQPLGAPQPPNEPHA. A compositionally biased stretch (polar residues) spans 10 to 24; it reads QHGSDSISFSGSYTQ.

Belongs to the trans-sulfuration enzymes family. MET7 subfamily. It depends on pyridoxal 5'-phosphate as a cofactor.

The catalysed reaction is cyclo(L-arginyl-(Z)-dehydro-3,4-dihydroxytyrosyl) + O-acetyl-L-homoserine = cyclo(L-arginyl-(Z)-dehydro-4-O-homoseryl-tyrosyl) + acetate + H(+). The protein operates within secondary metabolite biosynthesis. Its function is as follows. Cystathionine gamma-synthase-like protein; part of the ank cluster that mediates the biosynthesis of NK13650 C, a highly modified cyclo-arginine-tyrosine dipeptide. AnkD catalyzes the attachment of L-homoserine moiety using O-acetyl-L-homoserine as co-substrate. Within the pathway, the cyclodipeptide synthase ankA acts as the scaffold-generating enzyme and is responsible for formation of the cyclo-Arg-Tyr diketopiperazine (cRY) from L-Arg and L-Tyr. The ankA product cRY is desaturated by the cytochrome P450 monooxygenase ankB to yield a dehydro-cyclodipeptide intermediate. The FAD-dependent monooxygenase ankC then installs the m-OH, ankD catalyzes the attachment of L-homoserine, and ankE ligates citrate to the ankD product to yield NK13650 B. The O-methyltransferase ankF is responsible for methylation of the C-17 phenol group of NK13650 B to produce NK13650 D. Amidation of NK13650 D with L-Asp by ankG then leads to the production of NK13650 C, whereas amidation of NK13650 B produces NK13650 A. The sequence is that of Cystathionine gamma-synthase-like protein ankD from Aspergillus thermomutatus (Neosartorya pseudofischeri).